The chain runs to 439 residues: Ribosomal protein uS12 methylthiotransferase RimO (439 aa).

The MTTase N-terminal domain maps to 5-115 (PRISFTSLGC…VLDAVHRALP (111 aa)). [4Fe-4S] cluster is bound by residues C14, C50, C79, C146, C150, and C153. A Radical SAM core domain is found at 132–369 (LTPRHYAYLK…MARQQKISAR (238 aa)). Positions 372–438 (KRKVGTRQQI…QYDLHGSVAG (67 aa)) constitute a TRAM domain.

This sequence belongs to the methylthiotransferase family. RimO subfamily. It depends on [4Fe-4S] cluster as a cofactor.

It localises to the cytoplasm. It catalyses the reaction L-aspartate(89)-[ribosomal protein uS12]-hydrogen + (sulfur carrier)-SH + AH2 + 2 S-adenosyl-L-methionine = 3-methylsulfanyl-L-aspartate(89)-[ribosomal protein uS12]-hydrogen + (sulfur carrier)-H + 5'-deoxyadenosine + L-methionine + A + S-adenosyl-L-homocysteine + 2 H(+). Functionally, catalyzes the methylthiolation of an aspartic acid residue of ribosomal protein uS12. The chain is Ribosomal protein uS12 methylthiotransferase RimO from Bradyrhizobium diazoefficiens (strain JCM 10833 / BCRC 13528 / IAM 13628 / NBRC 14792 / USDA 110).